Reading from the N-terminus, the 288-residue chain is Shikimate dehydrogenase (NADP(+)) (288 aa).

Shikimate is bound by residues 22–24 (SLS) and Thr69. The Proton acceptor role is filled by Lys73. 2 residues coordinate shikimate: Asn94 and Asp110. NADP(+) is bound by residues 131–135 (GSGGA) and Leu228. Tyr230 provides a ligand contact to shikimate. NADP(+) is bound at residue Gly251.

It belongs to the shikimate dehydrogenase family. Homodimer.

It carries out the reaction shikimate + NADP(+) = 3-dehydroshikimate + NADPH + H(+). Its pathway is metabolic intermediate biosynthesis; chorismate biosynthesis; chorismate from D-erythrose 4-phosphate and phosphoenolpyruvate: step 4/7. Its function is as follows. Involved in the biosynthesis of the chorismate, which leads to the biosynthesis of aromatic amino acids. Catalyzes the reversible NADPH linked reduction of 3-dehydroshikimate (DHSA) to yield shikimate (SA). This chain is Shikimate dehydrogenase (NADP(+)), found in Synechococcus sp. (strain JA-2-3B'a(2-13)) (Cyanobacteria bacterium Yellowstone B-Prime).